Reading from the N-terminus, the 218-residue chain is Protein Syd (218 aa).

It belongs to the Syd family.

It localises to the cell inner membrane. Its function is as follows. Interacts with the SecY protein in vivo. May bind preferentially to an uncomplexed state of SecY, thus functioning either as a chelating agent for excess SecY in the cell or as a regulatory factor that negatively controls the translocase function. The protein is Protein Syd of Shewanella denitrificans (strain OS217 / ATCC BAA-1090 / DSM 15013).